A 411-amino-acid chain; its full sequence is Signal-transducing adaptor protein 2 (411 aa).

Residues 20–120 form the PH domain; the sequence is HYYESFLEKK…GFILTVVELR (101 aa). Tyr22 carries the phosphotyrosine modification. The region spanning 152–248 is the SH2 domain; sequence WCFLQVSRLE…RALVPFLLDE (97 aa). Tyr250 is subject to Phosphotyrosine; by PTK6. The segment at 291–320 is disordered; sequence VPVSVSSQEDKLPQLPPLPQLPDTDENYVT. Residues Tyr318 and Tyr330 each carry the phosphotyrosine modification. Residues 338 to 364 form a disordered region; sequence SSQAVPLKPKKPARLPAKPPKPSVVPK. Positions 390-410 form a coiled coil; that stretch reads TRLGDITAELEEKLQKRRALE.

In terms of assembly, interacts with PTK6 and CSF1R. Post-translationally, phosphorylated on tyrosine. Phosphorylated by PTK6 at Tyr-250 modulates PTK6-mediated STAT3 activation. Widely expressed.

The protein localises to the cytoplasm. It is found in the membrane. In terms of biological role, substrate of protein kinase PTK6. May play a regulatory role in the acute-phase response in systemic inflammation and may modulate STAT3 activity. The chain is Signal-transducing adaptor protein 2 (Stap2) from Mus musculus (Mouse).